The chain runs to 446 residues: UDP-N-acetylmuramate--L-alanine ligase (446 aa).

122-128 (GTHGKTT) is a binding site for ATP.

The protein belongs to the MurCDEF family.

It localises to the cytoplasm. The catalysed reaction is UDP-N-acetyl-alpha-D-muramate + L-alanine + ATP = UDP-N-acetyl-alpha-D-muramoyl-L-alanine + ADP + phosphate + H(+). It participates in cell wall biogenesis; peptidoglycan biosynthesis. In terms of biological role, cell wall formation. The sequence is that of UDP-N-acetylmuramate--L-alanine ligase from Nocardioides sp. (strain ATCC BAA-499 / JS614).